A 133-amino-acid chain; its full sequence is Phosphoribosyl-AMP cyclohydrolase (133 aa).

Position 90 (Asp90) interacts with Mg(2+). Cys91 serves as a coordination point for Zn(2+). Mg(2+)-binding residues include Asp92 and Asp94. Cys107 and Cys114 together coordinate Zn(2+).

The protein belongs to the PRA-CH family. As to quaternary structure, homodimer. Mg(2+) is required as a cofactor. It depends on Zn(2+) as a cofactor.

The protein resides in the cytoplasm. The enzyme catalyses 1-(5-phospho-beta-D-ribosyl)-5'-AMP + H2O = 1-(5-phospho-beta-D-ribosyl)-5-[(5-phospho-beta-D-ribosylamino)methylideneamino]imidazole-4-carboxamide. It functions in the pathway amino-acid biosynthesis; L-histidine biosynthesis; L-histidine from 5-phospho-alpha-D-ribose 1-diphosphate: step 3/9. In terms of biological role, catalyzes the hydrolysis of the adenine ring of phosphoribosyl-AMP. This is Phosphoribosyl-AMP cyclohydrolase from Streptomyces avermitilis (strain ATCC 31267 / DSM 46492 / JCM 5070 / NBRC 14893 / NCIMB 12804 / NRRL 8165 / MA-4680).